The primary structure comprises 354 residues: Muscleblind-like protein 3 (354 aa).

4 C3H1-type zinc fingers span residues 14–42 (WLTLEVCREFQRGTCSRADADCKFAHPPR), 48–74 (NGRVVACFDSLKGRCTRENCKYLHPPP), 174–202 (SDKLEVCREFQRGNCTRGENDCRYAHPTD), and 210–236 (DNTVTICMDYIKGRCSREKCKYFHPPA).

It belongs to the muscleblind family. As to expression, highly expressed in the placenta.

It is found in the nucleus. Its subcellular location is the cytoplasm. Its function is as follows. Mediates pre-mRNA alternative splicing regulation. Acts either as activator or repressor of splicing on specific pre-mRNA targets. Inhibits cardiac troponin-T (TNNT2) pre-mRNA exon inclusion but induces insulin receptor (IR) pre-mRNA exon inclusion in muscle. Antagonizes the alternative splicing activity pattern of CELF proteins. May play a role in myotonic dystrophy pathophysiology (DM). Could inhibit terminal muscle differentiation, acting at approximately the time of myogenin induction. This chain is Muscleblind-like protein 3 (MBNL3), found in Homo sapiens (Human).